Here is a 66-residue protein sequence, read N- to C-terminus: Conotoxin mr5.2 (66 aa).

The signal sequence occupies residues 1 to 19; the sequence is MRCVPVFVILLLLIASAPT. Residues 20–48 constitute a propeptide that is removed on maturation; sequence VDAQLKTKDDMPLASFHANVKRTLQILRD. Residues E57 and E61 each carry the 4-carboxyglutamate modification. N65 is subject to Asparagine amide.

Post-translationally, contains 2 disulfide bonds that can be either 'C1-C3, C2-C4' or 'C1-C4, C2-C3', since these disulfide connectivities have been observed for conotoxins with cysteine framework V (for examples, see AC P0DQQ7 and AC P81755). In terms of tissue distribution, expressed by the venom duct.

The protein localises to the secreted. The protein is Conotoxin mr5.2 of Conus marmoreus (Marble cone).